Here is a 277-residue protein sequence, read N- to C-terminus: MSVPTVLERIIARKFQEVAERSARVSLAELERLAKTADAPRGFANALIEQAKRKQPAVIAEIKKASPSKGVIREHFVPAEIAVSYEKGGATCLSVLTDVDYFQGADEYLQQARAAVSLPVIRKDFMVDPYQIVEARALGADCVLLIVSALDDVKMAELAATAKDVGLDVLVEVHDGDELERALKTLDTPLVGVNNRNLHTFEVSLETTLDLLPRIPRDRLAITESGILNRADVELMAINEVYSFLVGEAFMRAEQPGLELQRLFFPEQVKKTVQPLD.

Belongs to the TrpC family.

The catalysed reaction is 1-(2-carboxyphenylamino)-1-deoxy-D-ribulose 5-phosphate + H(+) = (1S,2R)-1-C-(indol-3-yl)glycerol 3-phosphate + CO2 + H2O. It functions in the pathway amino-acid biosynthesis; L-tryptophan biosynthesis; L-tryptophan from chorismate: step 4/5. The sequence is that of Indole-3-glycerol phosphate synthase (trpC) from Pseudomonas putida (Arthrobacter siderocapsulatus).